A 204-amino-acid chain; its full sequence is NAD(P)H-quinone oxidoreductase subunit M, chloroplastic (204 aa).

The N-terminal 27 residues, 1 to 27 (MASTSMSLTRACKVHAVLACSIPSVSS), are a transit peptide targeting the chloroplast.

It belongs to the NDH complex subunit M family. As to quaternary structure, part of the chloroplast NDH complex, composed of a mixture of chloroplast and nucleus encoded subunits. Component of the NDH subcomplex A, at least composed of ndhH, ndhI, ndhJ, ndhK, ndhL, ndhM, ndhN and ndhO.

It localises to the plastid. It is found in the chloroplast thylakoid membrane. The catalysed reaction is a plastoquinone + NADH + (n+1) H(+)(in) = a plastoquinol + NAD(+) + n H(+)(out). It carries out the reaction a plastoquinone + NADPH + (n+1) H(+)(in) = a plastoquinol + NADP(+) + n H(+)(out). In terms of biological role, NDH shuttles electrons from NAD(P)H:plastoquinone, via FMN and iron-sulfur (Fe-S) centers, to quinones in the photosynthetic chain and possibly in a chloroplast respiratory chain. The immediate electron acceptor for the enzyme in this species is believed to be plastoquinone. Couples the redox reaction to proton translocation, and thus conserves the redox energy in a proton gradient. The polypeptide is NAD(P)H-quinone oxidoreductase subunit M, chloroplastic (Physcomitrium patens (Spreading-leaved earth moss)).